Consider the following 232-residue polypeptide: LexA repressor (232 aa).

Positions Ile36–Lys56 form a DNA-binding region, H-T-H motif. The segment covering Gly62 to Thr86 has biased composition (basic and acidic residues). A disordered region spans residues Gly62–Ala107. Residues Ser156 and Lys193 each act as for autocatalytic cleavage activity in the active site.

This sequence belongs to the peptidase S24 family. In terms of assembly, homodimer.

The enzyme catalyses Hydrolysis of Ala-|-Gly bond in repressor LexA.. Represses a number of genes involved in the response to DNA damage (SOS response), including recA and lexA. In the presence of single-stranded DNA, RecA interacts with LexA causing an autocatalytic cleavage which disrupts the DNA-binding part of LexA, leading to derepression of the SOS regulon and eventually DNA repair. This chain is LexA repressor, found in Corynebacterium efficiens (strain DSM 44549 / YS-314 / AJ 12310 / JCM 11189 / NBRC 100395).